A 157-amino-acid chain; its full sequence is Protein FAM162B (157 aa).

A helical membrane pass occupies residues 104 to 123 (ACYIMIGLTIVACFAVIVSA).

This sequence belongs to the UPF0389 family.

The protein resides in the membrane. In Mus musculus (Mouse), this protein is Protein FAM162B (Fam162b).